A 115-amino-acid polypeptide reads, in one-letter code: Putative HNH nuclease YajD (115 aa).

The HNH domain maps to 27-75 (CGRCSREFVYSNLRELTVHHIDHDHTNNPEDGSNWELLCLYCHDHEHSK).

Belongs to the HNH nuclease family.

The polypeptide is Putative HNH nuclease YajD (yajD) (Escherichia coli O157:H7).